The sequence spans 172 residues: Ribosome maturation factor RimM (172 aa).

One can recognise a PRC barrel domain in the interval glutamine 95–leucine 168.

The protein belongs to the RimM family. In terms of assembly, binds ribosomal protein uS19.

The protein localises to the cytoplasm. In terms of biological role, an accessory protein needed during the final step in the assembly of 30S ribosomal subunit, possibly for assembly of the head region. Essential for efficient processing of 16S rRNA. May be needed both before and after RbfA during the maturation of 16S rRNA. It has affinity for free ribosomal 30S subunits but not for 70S ribosomes. This is Ribosome maturation factor RimM from Streptococcus pyogenes serotype M49 (strain NZ131).